We begin with the raw amino-acid sequence, 142 residues long: MAAMTVQLDIVSAESSIFSGLVAHLQVTGSEGDLGVMPGHAPLLTHIKPGMARIVKQDGKEEVFYLSGGILEVQPSSVSVLADVVMRADDIDEQAAAEAKRRAETAMADAGADFNYAAAAVELAQAVAQLRVVETIKKNIAR.

It belongs to the ATPase epsilon chain family. As to quaternary structure, F-type ATPases have 2 components, CF(1) - the catalytic core - and CF(0) - the membrane proton channel. CF(1) has five subunits: alpha(3), beta(3), gamma(1), delta(1), epsilon(1). CF(0) has three main subunits: a, b and c.

The protein resides in the cell inner membrane. Functionally, produces ATP from ADP in the presence of a proton gradient across the membrane. This is ATP synthase epsilon chain from Shewanella piezotolerans (strain WP3 / JCM 13877).